A 265-amino-acid polypeptide reads, in one-letter code: Basic leucine zipper 6 (265 aa).

2 disordered regions span residues 1–24 and 77–139; these read MAQL…SAGG and LMSM…RDPK. The segment covering 85–97 has biased composition (low complexity); it reads GGSSAPGSDNGGS. The span at 122-132 shows a compositional bias: polar residues; it reads TQEQAAATSPT. Residues 137 to 189 enclose the bZIP domain; the sequence is DPKRVKRILANRQSAQRSRVRKLQYISELERSVTTLQNEVSVLSPRVAFLDQQ. Residues 139–158 form a basic motif region; the sequence is KRVKRILANRQSAQRSRVRK. Positions 165-186 are leucine-zipper; sequence LERSVTTLQNEVSVLSPRVAFL. A disordered region spans residues 239–265; sequence LSGGLAADHAHVHGGPPPVRAEKELMS.

As to expression, expressed in roots, shoots and panicles.

It is found in the nucleus. In terms of biological role, transcription regulator. This chain is Basic leucine zipper 6 (BZIP06), found in Oryza sativa subsp. japonica (Rice).